The sequence spans 1328 residues: Protein turtle homolog B (1328 aa).

The signal sequence occupies residues 1–20 (MIWYVATLIASVISTRGLVA). Topologically, residues 21 to 722 (QVAHGLREEP…DLTDDGLARP (702 aa)) are extracellular. Ig-like domains follow at residues 30-115 (PEFV…ECKV), 139-226 (PTFT…LLVQ), 228-320 (PPFI…AYLT), 324-415 (PARV…ARLV), and 420-504 (PYFT…THLT). 2 disulfide bridges follow: C45–C113 and C161–C208. N-linked (GlcNAc...) asparagine glycans are attached at residues N241 and N258. Disulfide bonds link C250–C303, C346–C397, and C442–C488. 2 consecutive Fibronectin type-III domains span residues 512 to 604 (APGS…TLAF) and 614 to 708 (LVTP…STDI). N-linked (GlcNAc...) asparagine glycosylation is present at N624. The helical transmembrane segment at 723–743 (VLAGIVATICFLAAAILFSTL) threads the bilayer. Topologically, residues 744 to 1328 (AACFVNKQRK…EPPTTLPTSG (585 aa)) are cytoplasmic. Disordered regions lie at residues 758 to 817 (RKKD…EKEL), 914 to 1040 (PMSS…PEPW), and 1107 to 1328 (SPGR…PTSG). A phosphoserine mark is found at S775, S783, and S794. The segment covering 990 to 1001 (SPLSSVMSSPPL) has biased composition (low complexity). Polar residues-rich tracts occupy residues 1018-1033 (ENAS…TPTG), 1129-1141 (LVSQ…TSQG), and 1199-1214 (SRLS…SRTG). At R1136 the chain carries Omega-N-methylarginine. Phosphoserine occurs at positions 1207 and 1215. Low complexity predominate over residues 1246–1273 (SFSRKSTPSSTGSPSQSSRSGSPSYRPT). Pro residues-rich tracts occupy residues 1284-1295 (PSPPPGPAPPAP) and 1318-1328 (PEPPTTLPTSG).

It belongs to the immunoglobulin superfamily. Turtle family. In terms of assembly, found in a complex with MAGI2 and NLGN2, where it interacts with MAGI2 (via PDZ 5 and PDZ 6 domains). N-glycosylated and sialylated. Not significantly O-glycosylated. As to expression, detected primarily in brain, including cortex, hippocampus, cerebellum and striatum. Largely restricted to inhibitory GABAergic interneurons (at protein level).

It is found in the postsynaptic cell membrane. The protein localises to the postsynaptic density. Transmembrane protein which is abundantly expressed in interneurons, where it may regulate inhibitory synapse development. May mediate homophilic cell adhesion. The polypeptide is Protein turtle homolog B (Rattus norvegicus (Rat)).